Here is a 334-residue protein sequence, read N- to C-terminus: Mediator of RNA polymerase II transcription subunit 4 (334 aa).

The stretch at 76–100 (LIRTLKAHVEKRDEVIQQVENNLKA) forms a coiled coil. A compositionally biased stretch (low complexity) spans 188-203 (SSAQKPIIASPSASSS). Disordered stretches follow at residues 188-234 (SSAQ…GYGA) and 252-334 (EKQW…GRNK). 2 stretches are compositionally biased toward polar residues: residues 204–225 (NGGT…TNGD) and 264–282 (ATSS…SSPS).

Belongs to the Mediator complex subunit 4 family. In terms of assembly, component of the Mediator complex.

Its subcellular location is the nucleus. In terms of biological role, component of the Mediator complex, a coactivator involved in the regulated transcription of nearly all RNA polymerase II-dependent genes. Mediator functions as a bridge to convey information from gene-specific regulatory proteins to the basal RNA polymerase II transcription machinery. Mediator is recruited to promoters by direct interactions with regulatory proteins and serves as a scaffold for the assembly of a functional preinitiation complex with RNA polymerase II and the general transcription factors. This chain is Mediator of RNA polymerase II transcription subunit 4 (mdt-4), found in Caenorhabditis briggsae.